We begin with the raw amino-acid sequence, 241 residues long: Phycocyanobilin:ferredoxin oxidoreductase (241 aa).

Belongs to the HY2 family.

The catalysed reaction is (2R,3Z)-phycocyanobilin + 4 oxidized [2Fe-2S]-[ferredoxin] = biliverdin IXalpha + 4 reduced [2Fe-2S]-[ferredoxin] + 4 H(+). Functionally, catalyzes the four-electron reduction of biliverdin IX-alpha (2-electron reduction at both the A and D rings); the reaction proceeds via an isolatable 2-electron intermediate, 181,182-dihydrobiliverdin. This chain is Phycocyanobilin:ferredoxin oxidoreductase, found in Prochlorococcus marinus (strain MIT 9312).